A 609-amino-acid polypeptide reads, in one-letter code: Arginine--tRNA ligase (609 aa).

The short motif at 132 to 142 is the 'HIGH' region element; it reads ANPTSSLHVGH.

Belongs to the class-I aminoacyl-tRNA synthetase family. In terms of assembly, monomer.

The protein resides in the cytoplasm. It carries out the reaction tRNA(Arg) + L-arginine + ATP = L-arginyl-tRNA(Arg) + AMP + diphosphate. The chain is Arginine--tRNA ligase from Psychrobacter arcticus (strain DSM 17307 / VKM B-2377 / 273-4).